The sequence spans 260 residues: Acetylglutamate kinase (260 aa).

Substrate is bound by residues 46-47 (GG), R68, and N160.

Belongs to the acetylglutamate kinase family. ArgB subfamily.

The protein resides in the cytoplasm. It catalyses the reaction N-acetyl-L-glutamate + ATP = N-acetyl-L-glutamyl 5-phosphate + ADP. It functions in the pathway amino-acid biosynthesis; L-arginine biosynthesis; N(2)-acetyl-L-ornithine from L-glutamate: step 2/4. Its function is as follows. Catalyzes the ATP-dependent phosphorylation of N-acetyl-L-glutamate. This chain is Acetylglutamate kinase, found in Shewanella denitrificans (strain OS217 / ATCC BAA-1090 / DSM 15013).